The chain runs to 286 residues: Aquaporin NIP4-1 (286 aa).

2 helical membrane-spanning segments follow: residues 59-79 (VMVE…AALM) and 86-106 (LTFP…LSWL). The short motif at 112–114 (NPA) is the NPA 1 element. Transmembrane regions (helical) follow at residues 133–153 (LYVA…NAVM), 173–193 (LPFL…ATVA), and 201–221 (TVGG…IGPV). Positions 227–229 (NPA) match the NPA 2 motif. A helical transmembrane segment spans residues 241–261 (YDGVWIYVVAPVAGMLVGALC).

It belongs to the MIP/aquaporin (TC 1.A.8) family. NIP (TC 1.A.8.12) subfamily. In terms of tissue distribution, expressed in leaves and at lower levels in roots.

The protein localises to the membrane. Its function is as follows. Aquaporins facilitate the transport of water and small neutral solutes across cell membranes. The polypeptide is Aquaporin NIP4-1 (NIP4-1) (Oryza sativa subsp. japonica (Rice)).